The chain runs to 122 residues: UPF0102 protein CA_C1763 (122 aa).

This sequence belongs to the UPF0102 family.

This chain is UPF0102 protein CA_C1763, found in Clostridium acetobutylicum (strain ATCC 824 / DSM 792 / JCM 1419 / IAM 19013 / LMG 5710 / NBRC 13948 / NRRL B-527 / VKM B-1787 / 2291 / W).